We begin with the raw amino-acid sequence, 355 residues long: Syntaxin-5 (355 aa).

Residues 1–333 (MIPRKRYGSK…KYFQSVTSNR (333 aa)) are Cytoplasmic-facing. Positions 245–247 (IDM) match the IxM motif; signal for cargo packaging into COPII-coated vesicles motif. In terms of domain architecture, t-SNARE coiled-coil homology spans 263–325 (DSYIQSRADT…EAAHSEILKY (63 aa)). Residues 287–318 (FQQLAHMVKEQEETIQRIDENVLGAQLDVEAA) are a coiled coil. Residues 334–354 (WLMVKIFLILIVFFIIFVVFL) traverse the membrane as a helical; Anchor for type IV membrane protein segment. Ala355 is a topological domain (vesicular).

This sequence belongs to the syntaxin family. As to quaternary structure, part of a ternary complex containing STX5A, NSFL1C and VCP. Part of a unique SNARE complex composed of the Golgi SNAREs GOSR1, GOSR2 and YKT6. This complex also includes VTI1A. Component of a SNARE complex consisting of STX5, YKT6, GOSR1 and BET1L. Interacts with BET1L. Interacts with BET1. Interacts with COG4. Interacts with GM130/GOLGA2. Interacts (via IxM motif) with SEC24C and SEC24D; mediates STX5 packaging into COPII-coated vesicles. Interacts with VLDLR; this interaction mediates VLDLR translocation from the endoplasmic reticulum to the plasma membrane. In terms of tissue distribution, expressed in the brain, heart, spleen, lung, liver, kidney and testis.

It is found in the endoplasmic reticulum-Golgi intermediate compartment membrane. The protein localises to the golgi apparatus membrane. Functionally, mediates endoplasmic reticulum to Golgi transport. Together with p115/USO1 and GM130/GOLGA2, involved in vesicle tethering and fusion at the cis-Golgi membrane to maintain the stacked and inter-connected structure of the Golgi apparatus. Required for Golgi to endoplasmic reticulum retrogade transport, and for intra-Golgi transport. This chain is Syntaxin-5 (Stx5), found in Rattus norvegicus (Rat).